The chain runs to 420 residues: Ketoreductase sphF (420 aa).

Residues 1–21 (MLERPSFPRLGAGTRHHRPLG) are disordered. Residues 29 to 49 (WLLAFTGISGIAGMMIPYVPW) traverse the membrane as a helical segment. The disordered stretch occupies residues 275-298 (RQKRSPSPGRHPALGSPPAQLRQD).

Its subcellular location is the membrane. It carries out the reaction 3-oxopresphingofungin + NADPH + 2 H(+) = presphingofungin + NADP(+). It participates in secondary metabolite biosynthesis. Its function is as follows. Ketoreductase; part of the gene cluster that mediates the biosynthesis of sphingofungins, bioactive molecules acting as sphingolipid inhibitors via inhibiting serine palmitoyl transferase (SPT). Within the pathway, sphF catalyzes the reduction of the C-3 ketone of 3-keto-presphingofungin to produce presphingofungin. Sphingofungin biosynthesis starts with the PKS sphB that produces an C18 polyketide precursor 3-hydroxyoctadeca-4,10-dienoyl-ACP containing one delta-6 desaturation and one delta-12 desaturation. The aminoacyl transferase sphA uses the sphB product to produce 3-keto-presphingofungin by adding an aminomalonate molecule. SphF then reduces the C-3 ketone of 3-keto-presphingofungin which leads to presphingofungin. The cytochrome P450 monooxygenase sphH converts presphingofungin into sphingofungin B1 which is further converted to sphingofungin B by the dioxygenase sphC. SphC is also able to convert presphingofungin into sphingofungin B2. The acetyltransferase sphE acetylates sphingofungin B to produce sphingofungin C, but can also convert sphingofungin B1 into sphingofungin C1 and sphingofungin B2 into sphingofungin C2. Finally, sphingofungin C can be spontaneously converted into sphingofungin D. In Aspergillus fumigatus (strain CBS 144.89 / FGSC A1163 / CEA10) (Neosartorya fumigata), this protein is Ketoreductase sphF.